A 125-amino-acid chain; its full sequence is Small ribosomal subunit protein bS6 (125 aa).

Residues 96–125 (ETGASSMMKTVEREEARKASQAEFAAANER) form a disordered region. Basic and acidic residues predominate over residues 105-115 (TVEREEARKAS).

The protein belongs to the bacterial ribosomal protein bS6 family.

Functionally, binds together with bS18 to 16S ribosomal RNA. The protein is Small ribosomal subunit protein bS6 of Paracidovorax citrulli (strain AAC00-1) (Acidovorax citrulli).